Here is a 255-residue protein sequence, read N- to C-terminus: Kallikrein-4 (255 aa).

The first 25 residues, 1-25 (MMVTARTPWGWFLGCLILEVTGASA), serve as a signal peptide directing secretion. Positions 26-31 (SSVSSR) are excised as a propeptide. The Peptidase S1 domain occupies 32–253 (IIQGQDCSPH…FTNWIQTIIQ (222 aa)). H41 provides a ligand contact to Zn(2+). Cysteines 57 and 73 form a disulfide. H72 serves as the catalytic Charge relay system. E92 is a binding site for Zn(2+). Catalysis depends on D117, which acts as the Charge relay system. N-linked (GlcNAc...) asparagine glycosylation is found at N124 and N170. 3 disulfide bridges follow: C149–C214, C179–C193, and C204–C229. The active-site Charge relay system is S208.

The protein belongs to the peptidase S1 family. Kallikrein subfamily. Post-translationally, N-glycosylated. The N-glycan structures are of complex diantennary or triantennary type, which may be further modified with up to 2 sialic acid residues.

The protein resides in the secreted. In terms of biological role, has a major role in enamel formation. Required during the maturation stage of tooth development for clearance of enamel proteins and normal structural patterning of the crystalline matrix. This chain is Kallikrein-4, found in Mus musculus (Mouse).